Here is a 345-residue protein sequence, read N- to C-terminus: RDS/peripherin-like protein xRDS35 (345 aa).

At 1-24 the chain is on the cytoplasmic side; it reads MVLFKAKFSFQRRVKLAQTLWLLS. The helical transmembrane segment at 25-43 threads the bilayer; sequence WLSVLVGCLTFGMGIFLKV. Topologically, residues 44–61 are lumenal; sequence QLWIHNEVMENTSAHAVP. N-linked (GlcNAc...) asparagine glycosylation occurs at asparagine 54. Residues 62 to 80 form a helical membrane-spanning segment; it reads NTVITAGLVGILLGIYAGK. Residues 81–99 are Cytoplasmic-facing; that stretch reads VSQASMDVTKYQRWKSFMM. Residues 100 to 123 form a helical membrane-spanning segment; the sequence is PFFFLAILSCLVCLAALVLSVALR. The Lumenal portion of the chain corresponds to 124-264; that stretch reads GTLEESLKIG…LSYYTGIMAT (141 aa). The N-linked (GlcNAc...) asparagine glycan is linked to asparagine 229. Residues 265-290 form a helical membrane-spanning segment; sequence NGAAVTLSFLLQASVLVSLRYLHTSM. At 291 to 345 the chain is on the cytoplasmic side; it reads DKISGPDDMEADTEGFILEKGVTETMNTTLEKMKGLFMSNQVETAEGGGEAAAAS.

It belongs to the PRPH2/ROM1 family. In terms of assembly, homodimer; disulfide-linked. In terms of tissue distribution, rod specific.

The protein localises to the membrane. This is RDS/peripherin-like protein xRDS35 (rds35) from Xenopus laevis (African clawed frog).